We begin with the raw amino-acid sequence, 183 residues long: MMPRRDVLFLSLLLVIATVSAVALADDEADCVYTFFLRTGSTFKAGTDSIISARVYDKYGDYIGIRNLEAWGGLMGPGYNYYERGNLDIFSGKAPCLPSPVCSLNLTSDGSGDHHGWYVNYVEVTTAGVHAKCSYQSFDVEQWLASDTSPYELSAVRNNCPVSLRESVGRVGSEIRKTLSWIV.

Residues 1–25 (MMPRRDVLFLSLLLVIATVSAVALA) form the signal peptide. Positions 31–158 (CVYTFFLRTG…SPYELSAVRN (128 aa)) constitute a PLAT domain.

It localises to the endoplasmic reticulum. Functionally, involved in response to abiotic stress. In Arabidopsis thaliana (Mouse-ear cress), this protein is PLAT domain-containing protein 2.